The primary structure comprises 366 residues: Aminomethyltransferase (366 aa).

The protein belongs to the GcvT family. In terms of assembly, the glycine cleavage system is composed of four proteins: P, T, L and H.

It carries out the reaction N(6)-[(R)-S(8)-aminomethyldihydrolipoyl]-L-lysyl-[protein] + (6S)-5,6,7,8-tetrahydrofolate = N(6)-[(R)-dihydrolipoyl]-L-lysyl-[protein] + (6R)-5,10-methylene-5,6,7,8-tetrahydrofolate + NH4(+). Functionally, the glycine cleavage system catalyzes the degradation of glycine. This is Aminomethyltransferase from Bordetella avium (strain 197N).